Reading from the N-terminus, the 60-residue chain is UPF0434 protein Bpro_2950 (60 aa).

The protein belongs to the UPF0434 family.

The polypeptide is UPF0434 protein Bpro_2950 (Polaromonas sp. (strain JS666 / ATCC BAA-500)).